The sequence spans 237 residues: 1-(5-phosphoribosyl)-5-[(5-phosphoribosylamino)methylideneamino] imidazole-4-carboxamide isomerase (237 aa).

Asp8 functions as the Proton acceptor in the catalytic mechanism. Asp130 serves as the catalytic Proton donor.

This sequence belongs to the HisA/HisF family.

It is found in the cytoplasm. It catalyses the reaction 1-(5-phospho-beta-D-ribosyl)-5-[(5-phospho-beta-D-ribosylamino)methylideneamino]imidazole-4-carboxamide = 5-[(5-phospho-1-deoxy-D-ribulos-1-ylimino)methylamino]-1-(5-phospho-beta-D-ribosyl)imidazole-4-carboxamide. The protein operates within amino-acid biosynthesis; L-histidine biosynthesis; L-histidine from 5-phospho-alpha-D-ribose 1-diphosphate: step 4/9. The sequence is that of 1-(5-phosphoribosyl)-5-[(5-phosphoribosylamino)methylideneamino] imidazole-4-carboxamide isomerase from Halothermothrix orenii (strain H 168 / OCM 544 / DSM 9562).